We begin with the raw amino-acid sequence, 323 residues long: Homocysteine S-methyltransferase 1 (323 aa).

The Hcy-binding domain maps to 3 to 317 (VLEDLVARAG…STIRAVSKIL (315 aa)). 3 residues coordinate Zn(2+): C235, C302, and C303.

Monomer. Requires Zn(2+) as cofactor.

The catalysed reaction is S-methyl-L-methionine + L-homocysteine = 2 L-methionine + H(+). Its function is as follows. Catalyzes methyl transfer from S-methylmethionine (SMM) to adenosyl-L-homocysteine (AdoMet). SMM degradation (by HMT-1, HMT-2, HMT-3 and HMT-4) and biosynthesis (by MMT1) constitute the SMM cycle in plants, which is probably required to achieve short term control of AdoMet level. The protein is Homocysteine S-methyltransferase 1 (HMT-1) of Zea mays (Maize).